The following is a 391-amino-acid chain: Curcumin synthase 2 (391 aa).

The active site involves cysteine 166.

It belongs to the thiolase-like superfamily. Chalcone/stilbene synthases family. As to quaternary structure, homodimer.

It catalyses the reaction (E)-feruloylacetyl-CoA + (E)-feruloyl-CoA + H2O = curcumin + CO2 + 2 CoA. Its pathway is secondary metabolite biosynthesis; flavonoid biosynthesis. In terms of biological role, catalyzes the synthesis of curcumin by condensing feruloyl-CoA with a diketide-CoA in the curcuminoid biosynthesis. The polypeptide is Curcumin synthase 2 (CURS2) (Curcuma longa (Turmeric)).